Consider the following 639-residue polypeptide: Probable endo-1,3(4)-beta-glucanase ACLA_073210 (639 aa).

The first 21 residues, 1–21 (MAPSSLLLSVGSLIASSLASA), serve as a signal peptide directing secretion. A GH16 domain is found at 26–290 (IREQSQSYQL…WAGNVFGESG (265 aa)). A glycan (N-linked (GlcNAc...) asparagine) is linked at Asn-65. Catalysis depends on Glu-146, which acts as the Nucleophile. Residue Glu-151 is the Proton donor of the active site. Disordered regions lie at residues 337–384 (TVAS…TVAE) and 442–545 (QSSS…GSSI). The segment covering 339 to 348 (ASPNTASEVH) has biased composition (polar residues). Low complexity-rich tracts occupy residues 362–376 (PTVP…VPPA) and 478–488 (TTTEAVAETET). A lipid anchor (GPI-anchor amidated alanine) is attached at Ala-617. A propeptide spans 618–639 (GARKLSVGLSGLVGALAVAALA) (removed in mature form).

The protein belongs to the glycosyl hydrolase 16 family.

The protein resides in the cell membrane. The catalysed reaction is Endohydrolysis of (1-&gt;3)- or (1-&gt;4)-linkages in beta-D-glucans when the glucose residue whose reducing group is involved in the linkage to be hydrolyzed is itself substituted at C-3.. Functionally, mixed-linked glucanase involved in the degradation of complex natural cellulosic substrates. The chain is Probable endo-1,3(4)-beta-glucanase ACLA_073210 from Aspergillus clavatus (strain ATCC 1007 / CBS 513.65 / DSM 816 / NCTC 3887 / NRRL 1 / QM 1276 / 107).